A 196-amino-acid chain; its full sequence is CASP-like protein 1D1 (196 aa).

Residues 1-18 are compositionally biased toward basic and acidic residues; it reads MASTDKPDRESIKSEEAP. The segment at 1–22 is disordered; that stretch reads MASTDKPDRESIKSEEAPAAHP. Residues 1-29 lie on the Cytoplasmic side of the membrane; sequence MASTDKPDRESIKSEEAPAAHPRRSNYSS. Residues 30–50 form a helical membrane-spanning segment; that stretch reads VHVALRFLLFAASVTAVVVMV. Residues 51 to 84 lie on the Extracellular side of the membrane; that stretch reads TAKQTKIVPVPGLPISVPLEAKFSDSPAFLYFIS. The helical transmembrane segment at 85–105 threads the bilayer; sequence ALSVAGLYGILTTLAAISIVL. The Cytoplasmic portion of the chain corresponds to 106-112; it reads KPAYATR. Residues 113 to 133 traverse the membrane as a helical segment; it reads FLLHFALLDVLMLGIVASATG. The Extracellular portion of the chain corresponds to 134–167; it reads AAGGVAYVGLKGNSHVRWGKVCNVYDKFCQHVGS. The helical transmembrane segment at 168–188 threads the bilayer; sequence SIAVALFASVLLVLLTMLSVF. Over 189-196 the chain is Cytoplasmic; that stretch reads SIYRKIPK.

The protein belongs to the Casparian strip membrane proteins (CASP) family. As to quaternary structure, homodimer and heterodimers.

The protein resides in the cell membrane. In Populus trichocarpa (Western balsam poplar), this protein is CASP-like protein 1D1.